An 80-amino-acid polypeptide reads, in one-letter code: Sulfur carrier protein TusA (80 aa).

C17 functions as the Cysteine persulfide intermediate in the catalytic mechanism.

This sequence belongs to the sulfur carrier protein TusA family.

The protein resides in the cytoplasm. Its function is as follows. Sulfur carrier protein which probably makes part of a sulfur-relay system. This chain is Sulfur carrier protein TusA, found in Pseudomonas entomophila (strain L48).